A 215-amino-acid polypeptide reads, in one-letter code: Elongation factor Ts (215 aa).

Residues 80-83 (TDFV) are involved in Mg(2+) ion dislocation from EF-Tu.

This sequence belongs to the EF-Ts family.

It localises to the cytoplasm. Functionally, associates with the EF-Tu.GDP complex and induces the exchange of GDP to GTP. It remains bound to the aminoacyl-tRNA.EF-Tu.GTP complex up to the GTP hydrolysis stage on the ribosome. This Heliobacterium modesticaldum (strain ATCC 51547 / Ice1) protein is Elongation factor Ts.